The primary structure comprises 669 residues: DNA mismatch repair protein MutL (669 aa).

Positions 357–379 (EQRQNTENNQEKTFSSEESNSKS) are disordered. Polar residues predominate over residues 361-379 (NTENNQEKTFSSEESNSKS).

The protein belongs to the DNA mismatch repair MutL/HexB family.

This protein is involved in the repair of mismatches in DNA. It is required for dam-dependent methyl-directed DNA mismatch repair. May act as a 'molecular matchmaker', a protein that promotes the formation of a stable complex between two or more DNA-binding proteins in an ATP-dependent manner without itself being part of a final effector complex. This chain is DNA mismatch repair protein MutL, found in Staphylococcus aureus (strain Mu3 / ATCC 700698).